The chain runs to 197 residues: Ribosome maturation factor RimP (197 aa).

Belongs to the RimP family.

The protein localises to the cytoplasm. Required for maturation of 30S ribosomal subunits. The polypeptide is Ribosome maturation factor RimP (Acidovorax ebreus (strain TPSY) (Diaphorobacter sp. (strain TPSY))).